The primary structure comprises 91 residues: MDFLTMCMLAAGFGMAIGAFGTGIGQGLAVKSAVEGVSRNPGASGKILTTMMIGLAMIESLAIYVLVVCLIILFANPYKDVAIKLAETVAK.

2 consecutive transmembrane segments (helical) span residues 4–24 (LTMCMLAAGFGMAIGAFGTGI) and 53–73 (IGLAMIESLAIYVLVVCLIIL).

It belongs to the ATPase C chain family. In terms of assembly, F-type ATPases have 2 components, F(1) - the catalytic core - and F(0) - the membrane proton channel. F(1) has five subunits: alpha(3), beta(3), gamma(1), delta(1), epsilon(1). F(0) has three main subunits: a(1), b(2) and c(10-14). The alpha and beta chains form an alternating ring which encloses part of the gamma chain. F(1) is attached to F(0) by a central stalk formed by the gamma and epsilon chains, while a peripheral stalk is formed by the delta and b chains.

The protein resides in the cell inner membrane. Functionally, f(1)F(0) ATP synthase produces ATP from ADP in the presence of a proton or sodium gradient. F-type ATPases consist of two structural domains, F(1) containing the extramembraneous catalytic core and F(0) containing the membrane proton channel, linked together by a central stalk and a peripheral stalk. During catalysis, ATP synthesis in the catalytic domain of F(1) is coupled via a rotary mechanism of the central stalk subunits to proton translocation. Its function is as follows. Key component of the F(0) channel; it plays a direct role in translocation across the membrane. A homomeric c-ring of between 10-14 subunits forms the central stalk rotor element with the F(1) delta and epsilon subunits. The chain is ATP synthase subunit c from Geobacter metallireducens (strain ATCC 53774 / DSM 7210 / GS-15).